We begin with the raw amino-acid sequence, 169 residues long: Cell division inhibitor SulA (169 aa).

The segment at A106–Y112 is ftsZ binding. The lon protease binding stretch occupies residues K162–H169.

It belongs to the SulA family. Interacts with FtsZ. In terms of processing, is rapidly cleaved and degraded by the Lon protease once DNA damage is repaired.

Functionally, component of the SOS system and an inhibitor of cell division. Accumulation of SulA causes rapid cessation of cell division and the appearance of long, non-septate filaments. In the presence of GTP, binds a polymerization-competent form of FtsZ in a 1:1 ratio, thus inhibiting FtsZ polymerization and therefore preventing it from participating in the assembly of the Z ring. This mechanism prevents the premature segregation of damaged DNA to daughter cells during cell division. The sequence is that of Cell division inhibitor SulA from Escherichia fergusonii (strain ATCC 35469 / DSM 13698 / CCUG 18766 / IAM 14443 / JCM 21226 / LMG 7866 / NBRC 102419 / NCTC 12128 / CDC 0568-73).